The primary structure comprises 874 residues: Probable cation-transporting P-type ATPase (874 aa).

The Cytoplasmic segment spans residues 1–41; sequence MNSWTGLSEQAAIKSRQEHGANFLPEKKATPFWLLFLQQFK. Residues 42 to 62 traverse the membrane as a helical segment; sequence SLVVILLLLASLLSFVVAIVS. Over 63–79 the chain is Extracellular; that stretch reads GLRSNWNFNHDLIIEWV. A helical membrane pass occupies residues 80–100; the sequence is QPFIILLTVFANSLIGSIQEF. Residues 101–237 lie on the Cytoplasmic side of the membrane; that stretch reads KAQKSASALK…TKLSPLQQKL (137 aa). A helical membrane pass occupies residues 238–257; that stretch reads EKIGKWFSWFGLGLFAVVFL. Topologically, residues 258 to 275 are extracellular; that stretch reads VQTALLGFDNFTNNWSIA. Residues 276–293 form a helical membrane-spanning segment; it reads LIGAIALVVAIIPEGLVT. The Cytoplasmic segment spans residues 294 to 644; it reads FINVIFALSV…EEGRKTFLTC (351 aa). D331 acts as the 4-aspartylphosphate intermediate in catalysis. Residues D589 and D593 each contribute to the Mg(2+) site. Residues 645 to 664 traverse the membrane as a helical segment; it reads KRVLLNLFLTSIAGTVVVLL. At 665–687 the chain is on the extracellular side; that stretch reads GLFILGQVFKTNLLQQGHDFQVF. Residues 688-708 traverse the membrane as a helical segment; that stretch reads SPTQLLIINLFVHGFPAVALA. Topologically, residues 709–726 are cytoplasmic; it reads VQPVKEKLMVGSFSTKNL. The chain crosses the membrane as a helical span at residues 727–749; sequence FYNRQGFDLIWQSLFLSFLTLLF. Residues 750–770 are Extracellular-facing; that stretch reads YSLGIIYAINNRDLQTSGDLI. The chain crosses the membrane as a helical span at residues 771-790; sequence NRAGSTCGFFILGASAALNS. At 791 to 803 the chain is on the cytoplasmic side; it reads LNLMVDKPLLMTN. The helical transmembrane segment at 804–826 threads the bilayer; it reads PWFFKLVWIGSLASILVFLLIIF. Residues 827 to 844 are Extracellular-facing; it reads INPLGLVFNVLQDLTNHP. A helical membrane pass occupies residues 845–865; it reads VLISYSFGGVILYMGMNEVVK. The Cytoplasmic segment spans residues 866–874; that stretch reads LIRLGYGNI.

Belongs to the cation transport ATPase (P-type) (TC 3.A.3) family. Type II subfamily.

Its subcellular location is the cell membrane. The catalysed reaction is ATP + H2O = ADP + phosphate + H(+). Its function is as follows. Could mediate calcium influx. The polypeptide is Probable cation-transporting P-type ATPase (pacL) (Mycoplasma genitalium (strain ATCC 33530 / DSM 19775 / NCTC 10195 / G37) (Mycoplasmoides genitalium)).